A 421-amino-acid chain; its full sequence is Testin (421 aa).

The 108-residue stretch at 92–199 folds into the PET domain; sequence MILTNPVAAK…GDVKLPCEMD (108 aa). Positions 133 to 164 are disordered; it reads EKQPVAGSEGAQYRKKQLAKQLPAHDQDPSKC. Over residues 155 to 164 the composition is skewed to basic and acidic residues; that stretch reads PAHDQDPSKC. LIM zinc-binding domains follow at residues 234-297, 299-359, and 362-421; these read YSCY…CDSE, PRCA…NHAV, and QGCH…KMMS.

The protein belongs to the prickle / espinas / testin family. Interacts via LIM domain 1 with ZYX. Interacts (via LIM domain 3) with ENAH and VASP. Interacts with ALKBH4, talin, actin, alpha-actinin, GRIP1 and PXN. Interacts (via LIM domain 2) with ACTL7A (via N-terminus). Heterodimer with ACTL7A; the heterodimer interacts with ENAH to form a heterotrimer.

The protein localises to the cytoplasm. It localises to the cell junction. Its subcellular location is the focal adhesion. Scaffold protein that may play a role in cell adhesion, cell spreading and in the reorganization of the actin cytoskeleton. Plays a role in the regulation of cell proliferation. May act as a tumor suppressor. This Papio anubis (Olive baboon) protein is Testin (TES).